The sequence spans 80 residues: MSPKVQALIFIVGLITLLAAHAQEELSDNTESERGCSGAYKRCSSSQRCCEGRPCVCSAINSNCKCRKTYTELFKEYFEK.

The signal sequence occupies residues 1–22 (MSPKVQALIFIVGLITLLAAHA). A propeptide spanning residues 23 to 34 (QEELSDNTESER) is cleaved from the precursor. Disulfide bonds link Cys-36–Cys-50, Cys-43–Cys-55, Cys-49–Cys-66, and Cys-57–Cys-64.

Belongs to the neurotoxin 02 (plectoxin) family. 05 (U19-lycotoxin) subfamily. Expressed by the venom gland.

The protein localises to the secreted. The chain is U19-lycotoxin-Ls1a from Lycosa singoriensis (Wolf spider).